Consider the following 306-residue polypeptide: Pantothenate kinase (306 aa).

91 to 98 (GSVAVGKS) is a binding site for ATP.

The protein belongs to the prokaryotic pantothenate kinase family.

The protein resides in the cytoplasm. The catalysed reaction is (R)-pantothenate + ATP = (R)-4'-phosphopantothenate + ADP + H(+). The protein operates within cofactor biosynthesis; coenzyme A biosynthesis; CoA from (R)-pantothenate: step 1/5. In Streptococcus pneumoniae serotype 4 (strain ATCC BAA-334 / TIGR4), this protein is Pantothenate kinase (coaA).